The chain runs to 1033 residues: RNA cytidine acetyltransferase (1033 aa).

Residues 285-294 (GRGKSAALGL) and R465 each bind ATP. The region spanning 560 to 694 (VDLKNPKLPD…IHVRDAKTMP (135 aa)) is the N-acetyltransferase domain. Residues 626–628 (IAV), 633–639 (VKMGYGT), and R727 contribute to the acetyl-CoA site. The tract at residues 988–1033 (ENQIQKTNGKGARVVSIKGEKRKNNSLDASDKKTKEKPSSKKKFRK) is disordered. Positions 1005-1026 (KGEKRKNNSLDASDKKTKEKPS) are enriched in basic and acidic residues.

It belongs to the RNA cytidine acetyltransferase family. NAT10 subfamily. Interacts with tan1.

It is found in the nucleus. The protein resides in the nucleolus. It carries out the reaction a cytidine in 18S rRNA + acetyl-CoA + ATP + H2O = an N(4)-acetylcytidine in 18S rRNA + ADP + phosphate + CoA + H(+). It catalyses the reaction a cytidine in tRNA + acetyl-CoA + ATP + H2O = an N(4)-acetylcytidine in tRNA + ADP + phosphate + CoA + H(+). In terms of biological role, RNA cytidine acetyltransferase with specificity toward both 18S rRNA and tRNAs. Catalyzes the formation of N(4)-acetylcytidine (ac4C) at positions 1297 and 1815 in 18S rRNA. Required for early nucleolar cleavages of precursor rRNA at sites A0, A1 and A2 during 18S rRNA synthesis. Catalyzes the formation of ac4C in serine and leucine tRNAs. Requires the tRNA-binding adapter protein tan1 for full tRNA acetyltransferase activity but not for 18S rRNA acetylation. This is RNA cytidine acetyltransferase from Schizosaccharomyces pombe (strain 972 / ATCC 24843) (Fission yeast).